The sequence spans 267 residues: Transcription factor LBX1 (267 aa).

Residues 1–21 are compositionally biased toward basic and acidic residues; that stretch reads MTSKDEAKSSASSVEERRRNA. A disordered region spans residues 1 to 36; that stretch reads MTSKDEAKSSASSVEERRRNALDLLPPPANSNKPLT. Positions 127 to 186 form a DNA-binding region, homeobox; the sequence is RRKSRTAFTNHQIYELEKRFLYQKYLSPADRDQIAQQLGLTNAQVITWFQNRRAKLKRDL. A disordered region spans residues 211–267; that stretch reads SELEESGSERGNSRSRSPQLGLTSNHMPLSPSXPLTDQHASKECSEDEEDVEIDVDD. A compositionally biased stretch (polar residues) spans 228-237; sequence PQLGLTSNHM. Over residues 255–267 the composition is skewed to acidic residues; sequence SEDEEDVEIDVDD.

In terms of tissue distribution, expressed in all myoblasts that will populate body wall muscles as well as in a group of cells the migrate into the head.

Its subcellular location is the nucleus. Transcription factor that controls hypaxial muscle development by down-regulating myod1 and cdkn1b/p27, thereby allowing myoblasts to proliferate before the onset of terminal differentiation. The protein is Transcription factor LBX1 of Xenopus laevis (African clawed frog).